The sequence spans 837 residues: Periplasmic nitrate reductase (837 aa).

The segment at residues 1 to 32 (MTSPKLDRRQMLKLEAAAIAAAAAGLPVPALA) is a signal peptide (tat-type signal). A 4Fe-4S Mo/W bis-MGD-type domain is found at 44-100 (LKWDKAACRFCGTGCSVMVATKENRVVATHGDIKAEVNRGLNCVKGYFLSKIMYGHD). The [4Fe-4S] cluster site is built by cysteine 51, cysteine 54, cysteine 58, and cysteine 86. Mo-bis(molybdopterin guanine dinucleotide) is bound by residues lysine 88, glutamine 155, asparagine 180, cysteine 184, 217 to 224 (WGSNMAEM), 248 to 252 (STFEH), 267 to 269 (QTD), methionine 378, glutamine 382, asparagine 488, 514 to 515 (SD), lysine 537, aspartate 564, and 724 to 733 (TGRVLEHWHS). Residue tryptophan 800 coordinates substrate. Positions 808 and 825 each coordinate Mo-bis(molybdopterin guanine dinucleotide).

The protein belongs to the prokaryotic molybdopterin-containing oxidoreductase family. NasA/NapA/NarB subfamily. In terms of assembly, component of the periplasmic nitrate reductase NapAB complex composed of NapA and NapB. [4Fe-4S] cluster serves as cofactor. Requires Mo-bis(molybdopterin guanine dinucleotide) as cofactor. Predicted to be exported by the Tat system. The position of the signal peptide cleavage has not been experimentally proven.

It localises to the periplasm. The catalysed reaction is 2 Fe(II)-[cytochrome] + nitrate + 2 H(+) = 2 Fe(III)-[cytochrome] + nitrite + H2O. Functionally, catalytic subunit of the periplasmic nitrate reductase complex NapAB. Receives electrons from NapB and catalyzes the reduction of nitrate to nitrite. In Bradyrhizobium diazoefficiens (strain JCM 10833 / BCRC 13528 / IAM 13628 / NBRC 14792 / USDA 110), this protein is Periplasmic nitrate reductase.